The chain runs to 333 residues: Holliday junction branch migration complex subunit RuvB (333 aa).

The segment at methionine 1–tyrosine 182 is large ATPase domain (RuvB-L). Residues leucine 21, arginine 22, glycine 63, lysine 66, threonine 67, threonine 68, glutamate 129–phenylalanine 131, arginine 172, tyrosine 182, and arginine 219 each bind ATP. Mg(2+) is bound at residue threonine 67. The interval threonine 183–glutamine 253 is small ATPAse domain (RuvB-S). Positions lysine 256 to isoleucine 333 are head domain (RuvB-H). Residues arginine 311 and arginine 316 each coordinate DNA.

The protein belongs to the RuvB family. Homohexamer. Forms an RuvA(8)-RuvB(12)-Holliday junction (HJ) complex. HJ DNA is sandwiched between 2 RuvA tetramers; dsDNA enters through RuvA and exits via RuvB. An RuvB hexamer assembles on each DNA strand where it exits the tetramer. Each RuvB hexamer is contacted by two RuvA subunits (via domain III) on 2 adjacent RuvB subunits; this complex drives branch migration. In the full resolvosome a probable DNA-RuvA(4)-RuvB(12)-RuvC(2) complex forms which resolves the HJ.

The protein resides in the cytoplasm. It catalyses the reaction ATP + H2O = ADP + phosphate + H(+). Its function is as follows. The RuvA-RuvB-RuvC complex processes Holliday junction (HJ) DNA during genetic recombination and DNA repair, while the RuvA-RuvB complex plays an important role in the rescue of blocked DNA replication forks via replication fork reversal (RFR). RuvA specifically binds to HJ cruciform DNA, conferring on it an open structure. The RuvB hexamer acts as an ATP-dependent pump, pulling dsDNA into and through the RuvAB complex. RuvB forms 2 homohexamers on either side of HJ DNA bound by 1 or 2 RuvA tetramers; 4 subunits per hexamer contact DNA at a time. Coordinated motions by a converter formed by DNA-disengaged RuvB subunits stimulates ATP hydrolysis and nucleotide exchange. Immobilization of the converter enables RuvB to convert the ATP-contained energy into a lever motion, pulling 2 nucleotides of DNA out of the RuvA tetramer per ATP hydrolyzed, thus driving DNA branch migration. The RuvB motors rotate together with the DNA substrate, which together with the progressing nucleotide cycle form the mechanistic basis for DNA recombination by continuous HJ branch migration. Branch migration allows RuvC to scan DNA until it finds its consensus sequence, where it cleaves and resolves cruciform DNA. The protein is Holliday junction branch migration complex subunit RuvB of Bacillus cytotoxicus (strain DSM 22905 / CIP 110041 / 391-98 / NVH 391-98).